A 181-amino-acid chain; its full sequence is Small ribosomal subunit protein uS4 (181 aa).

Residues 106 to 168 (RRLQTLVYRK…PTSRIVKAKV (63 aa)) enclose the S4 RNA-binding domain.

This sequence belongs to the universal ribosomal protein uS4 family. In terms of assembly, part of the 30S ribosomal subunit. Contacts protein S5. The interaction surface between S4 and S5 is involved in control of translational fidelity.

In terms of biological role, one of the primary rRNA binding proteins, it binds directly to 16S rRNA where it nucleates assembly of the body of the 30S subunit. Functionally, with S5 and S12 plays an important role in translational accuracy. The sequence is that of Small ribosomal subunit protein uS4 from Caldivirga maquilingensis (strain ATCC 700844 / DSM 13496 / JCM 10307 / IC-167).